Here is a 95-residue protein sequence, read N- to C-terminus: Cystatin-A2 (95 aa).

The short motif at 47-51 (QLVNG) is the Secondary area of contact element.

It belongs to the cystatin family.

The protein localises to the cytoplasm. Functionally, intracellular thiol proteinase inhibitor. Inhibits cathepsin B, but not papain. The protein is Cystatin-A2 (cpiB) of Dictyostelium discoideum (Social amoeba).